The following is a 151-amino-acid chain: Globin (151 aa).

The region spanning serine 2–alanine 151 is the Globin domain. Residue histidine 100 coordinates heme b.

This sequence belongs to the globin family.

This is Globin from Biomphalaria glabrata (Bloodfluke planorb).